Reading from the N-terminus, the 218-residue chain is 3-dehydroquinate dehydratase (218 aa).

3-dehydroquinate-binding positions include 29–31 and Arg56; that span reads EFR. The Proton donor/acceptor role is filled by His116. The active-site Schiff-base intermediate with substrate is the Lys142. Arg180, Ser200, and Gln204 together coordinate 3-dehydroquinate.

This sequence belongs to the type-I 3-dehydroquinase family. Homodimer.

The catalysed reaction is 3-dehydroquinate = 3-dehydroshikimate + H2O. It functions in the pathway metabolic intermediate biosynthesis; chorismate biosynthesis; chorismate from D-erythrose 4-phosphate and phosphoenolpyruvate: step 3/7. Functionally, involved in the third step of the chorismate pathway, which leads to the biosynthesis of aromatic amino acids. Catalyzes the cis-dehydration of 3-dehydroquinate (DHQ) and introduces the first double bond of the aromatic ring to yield 3-dehydroshikimate. In Methanococcus vannielii (strain ATCC 35089 / DSM 1224 / JCM 13029 / OCM 148 / SB), this protein is 3-dehydroquinate dehydratase.